The chain runs to 394 residues: Mitogen-activated protein kinase homolog D5 (394 aa).

Residues 62–347 (RPPIMPIGKG…VENALAHPYL (286 aa)) form the Protein kinase domain. ATP is bound by residues 68–76 (IGKGAYGIV) and Lys91. Asp188 (proton acceptor) is an active-site residue. Residue Thr220 is modified to Phosphothreonine. The TXY motif lies at 220–222 (TEY). Residue Tyr222 is modified to Phosphotyrosine.

It belongs to the protein kinase superfamily. CMGC Ser/Thr protein kinase family. MAP kinase subfamily. It depends on Mg(2+) as a cofactor. In terms of processing, dually phosphorylated on Thr-220 and Tyr-222, which activates the enzyme. In terms of tissue distribution, leaves, roots, root apices, and dormant and growing axillary buds.

It carries out the reaction L-seryl-[protein] + ATP = O-phospho-L-seryl-[protein] + ADP + H(+). The catalysed reaction is L-threonyl-[protein] + ATP = O-phospho-L-threonyl-[protein] + ADP + H(+). Its activity is regulated as follows. Activated by tyrosine and threonine phosphorylation. In Pisum sativum (Garden pea), this protein is Mitogen-activated protein kinase homolog D5.